The following is a 172-amino-acid chain: Small ribosomal subunit protein uS5 (172 aa).

In terms of domain architecture, S5 DRBM spans 17–80 (MREKMIAVNR…EEARRKMIKV (64 aa)).

The protein belongs to the universal ribosomal protein uS5 family. Part of the 30S ribosomal subunit. Contacts proteins S4 and S8.

Functionally, with S4 and S12 plays an important role in translational accuracy. Located at the back of the 30S subunit body where it stabilizes the conformation of the head with respect to the body. This is Small ribosomal subunit protein uS5 from Herminiimonas arsenicoxydans.